We begin with the raw amino-acid sequence, 117 residues long: Resistin-like gamma (117 aa).

The signal sequence occupies residues 1–29; sequence MLTFNKMKTTTCSLLICISLLQLMVPVNT. Disulfide bonds link cysteine 61–cysteine 114, cysteine 73–cysteine 113, cysteine 82–cysteine 99, cysteine 84–cysteine 101, and cysteine 88–cysteine 103.

It belongs to the resistin/FIZZ family. Homodimer. Heterodimer with RETNLB. Expressed in colon, lung, spleen, pancreas, ileum and bone marrow (at protein level). In colon, found throughout the crypt and surface epithelium, including goblet cells (at protein level). Highest expression is observed in bone marrow, spleen and lung, with lower levels in other tissues. Detected at low levels in granulocytes, but not found in monocytes or lymphocytes. Has very weak expression in white adipose tissue.

Its subcellular location is the secreted. Its function is as follows. Probable hormone. Promotes chemotaxis in myeloid cells. The sequence is that of Resistin-like gamma from Mus musculus (Mouse).